The primary structure comprises 594 residues: Protein FAM200C (594 aa).

In Bos taurus (Bovine), this protein is Protein FAM200C (FAM200C).